The chain runs to 150 residues: Globin-3 (150 aa).

The region spanning 11–150 (PLSAAEKTKI…MICILLRSAY (140 aa)) is the Globin domain. Heme b-binding residues include histidine 74 and histidine 106.

It belongs to the globin family. As to quaternary structure, monomer.

In Petromyzon marinus (Sea lamprey), this protein is Globin-3.